A 378-amino-acid chain; its full sequence is MQSTIKPVEYDRPVAAGTVCGVGQAWAKVPDAPSAEERAALKARIKALLAREKAVLVAHYYVDAELQELADETGGCVADSLEMARFGRDHDAQTLVVAGVRFMGETAKILSPNKRILMPDLDATCSLDLGCPVGEFSAFCDAHPDRTVVVYANTSAAVKARADWMVTSSIGLEIVADLHARGEKIIWAPDRHLGSYIQKKTGADMLLWQGSCLVHDEFKGIELDLLRAEYPDAKVLVHPESPENVVAQADVVGSTTQLIDAAVKFDAKRFIVATDLGILHKMQLAAPGKTFIAAPTAGNSATCKSCAHCPWMAMNGLANLADVLERGHNEIFVDPAIGERARLPIDRMLEFAAAHKKRVQASGDLQRDQSLFANVGAA.

Residues H59 and S80 each contribute to the iminosuccinate site. [4Fe-4S] cluster is bound at residue C125. Iminosuccinate-binding positions include 151–153 (YAN) and S168. C212 lines the [4Fe-4S] cluster pocket. Iminosuccinate-binding positions include 238-240 (HPE) and T255. C309 provides a ligand contact to [4Fe-4S] cluster.

This sequence belongs to the quinolinate synthase family. Type 1 subfamily. [4Fe-4S] cluster serves as cofactor.

Its subcellular location is the cytoplasm. The catalysed reaction is iminosuccinate + dihydroxyacetone phosphate = quinolinate + phosphate + 2 H2O + H(+). Its pathway is cofactor biosynthesis; NAD(+) biosynthesis; quinolinate from iminoaspartate: step 1/1. Functionally, catalyzes the condensation of iminoaspartate with dihydroxyacetone phosphate to form quinolinate. This Burkholderia orbicola (strain MC0-3) protein is Quinolinate synthase.